The sequence spans 192 residues: Erythropoietin (192 aa).

Positions 1–27 (MGVHECPAWLWLLLSLVSLPLGLPVPG) are cleaved as a signal peptide. Cystine bridges form between Cys34-Cys187 and Cys56-Cys60. Asn51 carries N-linked (GlcNAc...) asparagine glycosylation. Residues Asn65 and Asn110 are each glycosylated (N-linked (GlcNAc...) asparagine). O-linked (GalNAc...) serine glycosylation is present at Ser152.

This sequence belongs to the EPO/TPO family. As to expression, produced by kidney or liver of adult mammals and by liver of fetal or neonatal mammals.

It localises to the secreted. Functionally, hormone involved in the regulation of erythrocyte proliferation and differentiation and the maintenance of a physiological level of circulating erythrocyte mass. Binds to EPOR leading to EPOR dimerization and JAK2 activation thereby activating specific downstream effectors, including STAT1 and STAT3. The sequence is that of Erythropoietin (EPO) from Macaca mulatta (Rhesus macaque).